The primary structure comprises 118 residues: MPRVKGGTVTRARRKKVLKLAKGYRGSKHVQFKAASTQLFVSYKYAFRDRKKRKSEFRRLWIARINAAARQNGLSYSKMMHGLKLAGVDMNRKMLADIAYNDEKTFAALAETAKKALA.

Belongs to the bacterial ribosomal protein bL20 family.

Its function is as follows. Binds directly to 23S ribosomal RNA and is necessary for the in vitro assembly process of the 50S ribosomal subunit. It is not involved in the protein synthesizing functions of that subunit. This Lactobacillus delbrueckii subsp. bulgaricus (strain ATCC BAA-365 / Lb-18) protein is Large ribosomal subunit protein bL20.